The sequence spans 331 residues: tRNA-cytidine(32) 2-sulfurtransferase (331 aa).

Residues 73-78 carry the PP-loop motif motif; the sequence is SGGKDS. The [4Fe-4S] cluster site is built by Cys-148, Cys-151, and Cys-239.

The protein belongs to the TtcA family. As to quaternary structure, homodimer. Requires Mg(2+) as cofactor. [4Fe-4S] cluster is required as a cofactor.

The protein localises to the cytoplasm. The enzyme catalyses cytidine(32) in tRNA + S-sulfanyl-L-cysteinyl-[cysteine desulfurase] + AH2 + ATP = 2-thiocytidine(32) in tRNA + L-cysteinyl-[cysteine desulfurase] + A + AMP + diphosphate + H(+). It functions in the pathway tRNA modification. In terms of biological role, catalyzes the ATP-dependent 2-thiolation of cytidine in position 32 of tRNA, to form 2-thiocytidine (s(2)C32). The sulfur atoms are provided by the cysteine/cysteine desulfurase (IscS) system. This chain is tRNA-cytidine(32) 2-sulfurtransferase, found in Burkholderia mallei (strain NCTC 10247).